Here is a 149-residue protein sequence, read N- to C-terminus: Large ribosomal subunit protein bL9 (149 aa).

It belongs to the bacterial ribosomal protein bL9 family.

Binds to the 23S rRNA. The protein is Large ribosomal subunit protein bL9 of Xylella fastidiosa (strain 9a5c).